Here is a 359-residue protein sequence, read N- to C-terminus: MENESSESRNRARLAIMELANMISVPMSLNAAVRLGIADAIWNGGANSPLSAAEILPRLHLPSHTTIGGDPENLQRILRMLTSYGVFSEHLVGSIERKYSLTDVGKTLVTDSGGLSYAAYVLQHHQEALMRAWPLVHTAVVEPETEPYVKANGEAAYAQYGKSEEMNGLMQKAMSGVSVPFMKAILDGYDGFKSVDILVDVGGSAGDCLRMILQQFPNVREGINFDLPEVVAKAPNIPGVTHVGGDMFQSVPSADAIFMKWVLTTWTDEECKQIMKNCYNALPVGGKLIACEPVLPKETDESHRTRALLEGDIFVMTIYRTKGKHRTEEEFIELGLSAGFPTFRPFYIDYFYTILEFQK.

S-adenosyl-L-methionine is bound at residue Asp-226.

This sequence belongs to the class I-like SAM-binding methyltransferase superfamily. Cation-independent O-methyltransferase family. Highly expressed in anthers, pistils, developing siliques, and developing seeds.

Its subcellular location is the cytoplasm. The protein localises to the cytosol. The enzyme catalyses nicotinate + S-adenosyl-L-methionine = N-methylnicotinate + S-adenosyl-L-homocysteine. Functionally, involved in nicotinate detoxification in planta. Catalyzes the conversion of nicotinate to N-methylnicotinate, which is a detoxified form of endogenous nicotinate in planta. The protein is Nicotinate N-methyltransferase 1 of Arabidopsis thaliana (Mouse-ear cress).